Reading from the N-terminus, the 109-residue chain is Movement protein TGB2 (109 aa).

The Cytoplasmic segment spans residues 1-9 (MPLTPPPDF). The helical transmembrane segment at 10–30 (TKVYLSAALGVSLALVVWLLI) threads the bilayer. The Lumenal segment spans residues 31 to 72 (RSTLPVVGDRDHNLPHGGWYRDGTKSVFYNSPGRLNSIEARK). The helical transmembrane segment at 73–93 (APLLGQPWAIVVLLVLLIWAS) threads the bilayer. Over 94-109 (HKLGRPNCRACAGSHT) the chain is Cytoplasmic.

This sequence belongs to the Tymovirales TGBp2 protein family.

It localises to the host endoplasmic reticulum membrane. Plays a role in viral cell-to-cell propagation, by facilitating genome transport to neighboring plant cells through plasmosdesmata,. In Solanum tuberosum (Potato), this protein is Movement protein TGB2.